The following is a 307-amino-acid chain: MKYELNGQVVLISGGSQGLGRAFAQKYIEESDSTVVIVSRSEEKLTRAGEAICGGARRLGAGGAGRLLYYACNLGDAAAVGGLFATLADAGLQVTQVLFCAGGAVPGLFAELSSAQLAAGVEMNYGTALHLAHGAVRHGARHLVFFSSAAAVYPFIGYSQYAPLKAALRALVAVLRQECDGVRVSCVYPGNFASEGYAEENRTKPAITAAIEGSSEAISCAACCDKIVRGLRSGYDDVTTDFVGWLLLACNMGFNYHSTTYFLWPLGWLLGALVNLLVVPIYMLLCRWDIHKWRTQREETHLAAKTD.

Leucine 11 is an NADP(+) binding site. Positions 14, 16, and 18 each coordinate NADPH. Residues 14–18 carry the GXSXG motif; the sequence is GGSQG. Leucine 19 serves as a coordination point for NADP(+). 3 residues coordinate NADPH: arginine 40, lysine 44, and leucine 74. Residue serine 147 is the Proton donor of the active site. Residues tyrosine 161, lysine 165, and serine 194 each coordinate NADP(+). The active-site Proton acceptor is tyrosine 161. Catalysis depends on lysine 165, which acts as the Lowers pKa of active site Tyr. A helical membrane pass occupies residues 261–281; sequence YFLWPLGWLLGALVNLLVVPI.

The protein belongs to the short-chain dehydrogenases/reductases (SDR) family.

It localises to the endoplasmic reticulum membrane. It carries out the reaction sphinganine + NADP(+) = 3-oxosphinganine + NADPH + H(+). Its pathway is lipid metabolism; sphingolipid metabolism. Functionally, catalyzes the reduction of 3'-oxosphinganine (3-ketodihydrosphingosine/KDS) to sphinganine (dihydrosphingosine/DHS), the second step of de novo sphingolipid biosynthesis. This is 3-ketodihydrosphingosine reductase TSC10 (TSC10) from Eremothecium gossypii (strain ATCC 10895 / CBS 109.51 / FGSC 9923 / NRRL Y-1056) (Yeast).